The sequence spans 45 residues: Cytochrome c6 (45 aa).

Positions 12, 15, and 16 each coordinate heme c.

Belongs to the cytochrome c family. PetJ subfamily. As to quaternary structure, monomer. In terms of processing, binds 1 heme c group covalently per subunit.

The protein resides in the cellular thylakoid lumen. In terms of biological role, functions as an electron carrier between membrane-bound cytochrome b6-f and photosystem I in oxygenic photosynthesis. This is Cytochrome c6 (petJ) from Prochlorothrix hollandica.